We begin with the raw amino-acid sequence, 719 residues long: 2'-5'-oligoadenylate synthase 2 (719 aa).

Gly-2 is lipidated: N-myristoyl glycine. OAS domain regions lie at residues 11–335 (VPAQ…SWNV) and 343–683 (TPGH…WKVP). At Lys-378 the chain carries N6-acetyllysine. Ser-396 provides a ligand contact to ATP. Asp-408, Asp-410, and Asp-481 together coordinate Mg(2+). Positions 544 and 547 each coordinate ATP.

The protein belongs to the 2-5A synthase family. As to quaternary structure, homodimer. The cofactor is Mg(2+). In terms of processing, myristoylation is not essential for its activity. Post-translationally, glycosylated. Glycosylation is essential for its activity.

It is found in the cytoplasm. The protein resides in the perinuclear region. The enzyme catalyses 3 ATP = 5'-triphosphoadenylyl-(2'-&gt;5')-adenylyl-(2'-&gt;5')-adenosine + 2 diphosphate. Its activity is regulated as follows. Produced as a latent enzyme which is activated by double stranded RNA (dsRNA) generated during the course of viral infection. The dsRNA activator must be at least 15 nucleotides long, and no modification of the 2'-hydroxyl group is tolerated. ssRNA or dsDNA do not act as activators. Strongly inhibited by copper, iron and zinc ions. Partially inhibited by cobalt and nickel ions. Functionally, interferon-induced, dsRNA-activated antiviral enzyme which plays a critical role in cellular innate antiviral response. Activated by detection of double stranded RNA (dsRNA): polymerizes higher oligomers of 2'-5'-oligoadenylates (2-5A) from ATP which then bind to the inactive monomeric form of ribonuclease L (RNASEL) leading to its dimerization and subsequent activation. Activation of RNASEL leads to degradation of cellular as well as viral RNA, resulting in the inhibition of protein synthesis, thus terminating viral replication. Can mediate the antiviral effect via the classical RNASEL-dependent pathway or an alternative antiviral pathway independent of RNASEL. In addition, it may also play a role in other cellular processes such as apoptosis, cell growth, differentiation and gene regulation. May act as a negative regulator of lactation, stopping lactation in virally infected mammary gland lobules, thereby preventing transmission of viruses to neonates. Non-infected lobules would not be affected, allowing efficient pup feeding during infection. This chain is 2'-5'-oligoadenylate synthase 2, found in Homo sapiens (Human).